Consider the following 321-residue polypeptide: MEYKPVPTVKDAAPFDASQDAQVLRAAMKGFGTDEQEIIDVLVGRSNQQRQTIKAVYEAEFERDLVDDLKDELGGKFEDVIVGLMMPPVEYLCKQLHAAMAGIGTEEATLVEILCTKTNEEMAQIVAVYEERYQRPLAEQMCSETSGFFRRLLTLIVTGVRDGLDTPVDVGQAKEQAAQLYSAGEAKLGTDEEVFNRIMSHASFPQLRLVFEEYKVLSGQTIEQAIKHEMSDELHEAMMAIVECVQSPAAFFANRLYKAMNGAGTDDATLIRIIVSRSEIDLETIKQEFERIYNRTLHSAVVDAETSGDYKRALTALLGSA.

4 Annexin repeats span residues 15 to 86 (FDAS…GLMM), 87 to 158 (PPVE…LIVT), 171 to 243 (GQAK…AIVE), and 247 to 319 (SPAA…ALLG).

Belongs to the annexin family.

The sequence is that of Annexin B10 (AnxB10) from Drosophila melanogaster (Fruit fly).